Reading from the N-terminus, the 913-residue chain is Striatin-interacting protein homolog (913 aa).

3 stretches are compositionally biased toward low complexity: residues 177 to 188 (QQQQQQQQNENE), 195 to 204 (TNFTTTTTTT), and 791 to 811 (NNNN…NNDN). Disordered stretches follow at residues 177-204 (QQQQ…TTTT) and 791-814 (NNNN…NGLT).

It belongs to the STRIP family.

The polypeptide is Striatin-interacting protein homolog (fam40) (Dictyostelium discoideum (Social amoeba)).